The sequence spans 425 residues: Formyl-CoA:oxalate CoA-transferase (425 aa).

CoA-binding positions include 17–18 (QS), R38, 72–75 (LDTK), 96–98 (NFG), R104, and 136–139 (KVYE). The active-site Nucleophile is D168. Position 247–249 (247–249 (GGQ)) interacts with substrate.

It belongs to the CoA-transferase III family. Frc subfamily. Homodimer.

It catalyses the reaction formyl-CoA + oxalate = oxalyl-CoA + formate. It functions in the pathway metabolic intermediate degradation; oxalate degradation; CO(2) and formate from oxalate: step 1/2. Its function is as follows. Involved in the catabolism of oxalate and in the adapatation to low pH via the induction of the oxalate-dependent acid tolerance response (ATR). Catalyzes the transfer of the CoA moiety from formyl-CoA to oxalate. This Bradyrhizobium diazoefficiens (strain JCM 10833 / BCRC 13528 / IAM 13628 / NBRC 14792 / USDA 110) protein is Formyl-CoA:oxalate CoA-transferase.